Consider the following 953-residue polypeptide: Leucine-rich repeat receptor protein kinase HPCA1 (953 aa).

The first 23 residues, 1 to 23 (MSSRTGASLLLILFFFQICSVSA), serve as a signal peptide directing secretion. Residues 24–558 (LTNGLDASAL…EVSSKSSNKS (535 aa)) are Extracellular-facing. LRR repeat units follow at residues 64–88 (NDRVVSISLGNLDLEGKLPADISFL), 89–113 (SELRILDLSYNPKLSGPLPPNIGNL), 115–137 (KLRNLILVGCSFSGQIPESIGTL), 138–162 (KELIYLSLNLNKFSGTIPPSIGLLS), 164–187 (LYWFDIADNQIEGELPVSNGTSAP), and 192–216 (LLQTKHFHFGKNKLSGNIPKELFSS). N182 carries N-linked (GlcNAc...) asparagine glycosylation. N-linked (GlcNAc...) asparagine glycosylation is present at N217. 7 LRR repeats span residues 218-241 (MSLIHVLFDGNQFTGEIPETLSLV), 242-265 (KTLTVLRLDRNKLIGDIPSYLNNL), 266-290 (TNLNELYLANNRFTGTLPNLTSLTS), 292-311 (YTLDVSNNTLDFSPIPSWIS), 313-337 (LPSLSTLRMEGIQLNGPIPISFFSP), 339-361 (QLQTVILKRNSIVESLDFGTDVS), and 362-384 (SQLEFVDLQYNEITDYKPSANKV). Residues N264, N284, and N298 are each glycosylated (N-linked (GlcNAc...) asparagine). An N-linked (GlcNAc...) asparagine glycan is attached at N411. 2 disulfide bridges follow: C421-C424 and C434-C436. 4 N-linked (GlcNAc...) asparagine glycosylation sites follow: N456, N459, N510, and N523. Residues 559–579 (ILIGAVVGVVVLLLLLTIAGI) form a helical membrane-spanning segment. The Cytoplasmic segment spans residues 580-953 (YALRQKKRAE…NFPASKLEPQ (374 aa)). Residues S606 and S607 each carry the phosphoserine modification. A Protein kinase domain is found at 631 to 905 (FSEANDVGGG…EVVKEIENIM (275 aa)). ATP-binding positions include 637-645 (VGGGGYGKV) and K659. The Proton acceptor role is filled by D755. Phosphothreonine is present on residues T786, T789, and T790. The segment covering 912-921 (PNSDSATSSR) has biased composition (polar residues). The segment at 912–953 (PNSDSATSSRTYEDAIKGSGDPYGSESFQYSGNFPASKLEPQ) is disordered. The residue at position 942 (S942) is a Phosphoserine.

This sequence belongs to the protein kinase superfamily. Ser/Thr protein kinase family. In terms of processing, autophosphorylated at Ser-606, Ser-607, Thr-786, Thr-789, Thr-790 and Ser-942 in response to extracellular hydrogen peroxide. As to expression, widely expressed.

It localises to the cell membrane. It carries out the reaction L-seryl-[protein] + ATP = O-phospho-L-seryl-[protein] + ADP + H(+). The enzyme catalyses L-threonyl-[protein] + ATP = O-phospho-L-threonyl-[protein] + ADP + H(+). With respect to regulation, activated by autophosphorylation on serine and threonine residues in response to extracellular hydrogen peroxide. Functionally, leucine-rich repeat receptor protein kinase that acts as sensor of extracellular hydrogen peroxide. Required for intracellular calcium influx in response to extracellular hydrogen peroxide. Mediates hydrogen peroxide-induced activation of calcium channels in guard cells and is required for stomatal closure. This Arabidopsis thaliana (Mouse-ear cress) protein is Leucine-rich repeat receptor protein kinase HPCA1.